The sequence spans 1013 residues: Polyprotein of EF-Ts, chloroplastic (1013 aa).

The transit peptide at Met-1–Phe-43 directs the protein to the chloroplast. Positions Gly-64–Lys-133 constitute an S1 motif 1 domain. A compositionally biased stretch (acidic residues) spans Ser-141–Thr-150. A disordered region spans residues Ser-141–Asp-163. The S1 motif 2 domain maps to Met-227–Phe-331. Positions Gln-772–Val-798 are disordered. The span at Pro-781 to Lys-793 shows a compositional bias: basic and acidic residues.

Belongs to the EF-Ts family. In terms of assembly, component of the chloroplast ribosome 30S and 70S subunits, as well as polysomes. As to quaternary structure, component of the chloroplast ribosome 70S subunit, and at low levels, present in polysomes. Associates transiently with chloroplast polysomes.

Its subcellular location is the plastid. The protein localises to the chloroplast. Its function is as follows. Associates with the EF-Tu.GDP complex and induces the exchange of GDP to GTP. It remains bound to the aminoacyl-tRNA.EF-Tu.GTP complex up to the GTP hydrolysis stage on the ribosome. Functionally, binds to psbD and psbA mRNAs 5'-untranslated regions (UTRs) in vitro. The protein is Polyprotein of EF-Ts, chloroplastic of Chlamydomonas reinhardtii (Chlamydomonas smithii).